The following is a 121-amino-acid chain: Flagellar protein FliT (121 aa).

The tract at residues Met-1–Leu-50 is required for homodimerization. Residues Met-60 to Val-98 form a fliD binding region.

This sequence belongs to the FliT family. In terms of assembly, homodimer. Interacts with FliD and FlhC.

It localises to the cytoplasm. The protein resides in the cytosol. Its function is as follows. Dual-function protein that regulates the transcription of class 2 flagellar operons and that also acts as an export chaperone for the filament-capping protein FliD. As a transcriptional regulator, acts as an anti-FlhDC factor; it directly binds FlhC, thus inhibiting the binding of the FlhC/FlhD complex to class 2 promoters, resulting in decreased expression of class 2 flagellar operons. As a chaperone, effects FliD transition to the membrane by preventing its premature polymerization, and by directing it to the export apparatus. The protein is Flagellar protein FliT of Escherichia coli (strain ATCC 8739 / DSM 1576 / NBRC 3972 / NCIMB 8545 / WDCM 00012 / Crooks).